A 293-amino-acid chain; its full sequence is NAD kinase (293 aa).

The Proton acceptor role is filled by D72. Residues 72–73 (DG), 146–147 (ND), R157, R174, D176, 187–192 (TAYALS), and Q247 each bind NAD(+).

It belongs to the NAD kinase family. It depends on a divalent metal cation as a cofactor.

The protein resides in the cytoplasm. The enzyme catalyses NAD(+) + ATP = ADP + NADP(+) + H(+). Its function is as follows. Involved in the regulation of the intracellular balance of NAD and NADP, and is a key enzyme in the biosynthesis of NADP. Catalyzes specifically the phosphorylation on 2'-hydroxyl of the adenosine moiety of NAD to yield NADP. This is NAD kinase from Teredinibacter turnerae (strain ATCC 39867 / T7901).